A 583-amino-acid chain; its full sequence is J protein JJJ2 (583 aa).

One can recognise a J domain in the interval Arg-11–Ile-79. Residues Ser-215 to Leu-224 are compositionally biased toward polar residues. Positions Ser-215–Ser-313 are disordered. Ser-229 bears the Phosphoserine mark. Low complexity predominate over residues Gln-240–Gln-252. Positions Ser-262–Pro-281 are enriched in basic and acidic residues. Residues Lys-298–Ser-313 are compositionally biased toward polar residues.

It is found in the cytoplasm. Its subcellular location is the nucleus. The chain is J protein JJJ2 (JJJ2) from Saccharomyces cerevisiae (strain ATCC 204508 / S288c) (Baker's yeast).